The chain runs to 230 residues: Cytochrome c oxidase subunit 2 (230 aa).

At 1-14 (MAHPTQLGFKDAAM) the chain is on the mitochondrial intermembrane side. The chain crosses the membrane as a helical span at residues 15–45 (PVMEELLHFHDHALMIVLLISTLVLYIITAM). Topologically, residues 46 to 59 (VSTKLTNKYILDSQ) are mitochondrial matrix. Residues 60–87 (EIEIVWTILPAVILVLIALPSLRILYLM) form a helical membrane-spanning segment. The Mitochondrial intermembrane segment spans residues 88–230 (DEINDPHLTI…NWSSLMLEDA (143 aa)). Cu cation contacts are provided by His-161, Cys-196, Glu-198, Cys-200, His-204, and Met-207. A Mg(2+)-binding site is contributed by Glu-198.

Belongs to the cytochrome c oxidase subunit 2 family. In terms of assembly, component of the cytochrome c oxidase (complex IV, CIV), a multisubunit enzyme composed of 14 subunits. The complex is composed of a catalytic core of 3 subunits MT-CO1, MT-CO2 and MT-CO3, encoded in the mitochondrial DNA, and 11 supernumerary subunits COX4I, COX5A, COX5B, COX6A, COX6B, COX6C, COX7A, COX7B, COX7C, COX8 and NDUFA4, which are encoded in the nuclear genome. The complex exists as a monomer or a dimer and forms supercomplexes (SCs) in the inner mitochondrial membrane with NADH-ubiquinone oxidoreductase (complex I, CI) and ubiquinol-cytochrome c oxidoreductase (cytochrome b-c1 complex, complex III, CIII), resulting in different assemblies (supercomplex SCI(1)III(2)IV(1) and megacomplex MCI(2)III(2)IV(2)). Found in a complex with TMEM177, COA6, COX18, COX20, SCO1 and SCO2. Interacts with TMEM177 in a COX20-dependent manner. Interacts with COX20. Interacts with COX16. The cofactor is Cu cation.

The protein resides in the mitochondrion inner membrane. The catalysed reaction is 4 Fe(II)-[cytochrome c] + O2 + 8 H(+)(in) = 4 Fe(III)-[cytochrome c] + 2 H2O + 4 H(+)(out). Functionally, component of the cytochrome c oxidase, the last enzyme in the mitochondrial electron transport chain which drives oxidative phosphorylation. The respiratory chain contains 3 multisubunit complexes succinate dehydrogenase (complex II, CII), ubiquinol-cytochrome c oxidoreductase (cytochrome b-c1 complex, complex III, CIII) and cytochrome c oxidase (complex IV, CIV), that cooperate to transfer electrons derived from NADH and succinate to molecular oxygen, creating an electrochemical gradient over the inner membrane that drives transmembrane transport and the ATP synthase. Cytochrome c oxidase is the component of the respiratory chain that catalyzes the reduction of oxygen to water. Electrons originating from reduced cytochrome c in the intermembrane space (IMS) are transferred via the dinuclear copper A center (CU(A)) of subunit 2 and heme A of subunit 1 to the active site in subunit 1, a binuclear center (BNC) formed by heme A3 and copper B (CU(B)). The BNC reduces molecular oxygen to 2 water molecules using 4 electrons from cytochrome c in the IMS and 4 protons from the mitochondrial matrix. The chain is Cytochrome c oxidase subunit 2 (mt-co2) from Cyprinus carpio (Common carp).